The primary structure comprises 184 residues: Dual-action ribosomal maturation protein DarP (184 aa).

The interval 1–21 (MYKHPDEEWLDEIPGQQENED) is disordered.

The protein belongs to the DarP family.

The protein localises to the cytoplasm. Its function is as follows. Member of a network of 50S ribosomal subunit biogenesis factors which assembles along the 30S-50S interface, preventing incorrect 23S rRNA structures from forming. Promotes peptidyl transferase center (PTC) maturation. This Edwardsiella ictaluri (strain 93-146) protein is Dual-action ribosomal maturation protein DarP.